Consider the following 355-residue polypeptide: Anthranilate phosphoribosyltransferase (355 aa).

5-phospho-alpha-D-ribose 1-diphosphate contacts are provided by residues G85, 88–89 (GD), T93, 95–98 (NIST), 113–121 (KHGNRAASS), and S125. Residue G85 coordinates anthranilate. S97 serves as a coordination point for Mg(2+). N116 provides a ligand contact to anthranilate. R171 contributes to the anthranilate binding site. Mg(2+) contacts are provided by D229 and E230.

Belongs to the anthranilate phosphoribosyltransferase family. As to quaternary structure, homodimer. Mg(2+) is required as a cofactor.

It carries out the reaction N-(5-phospho-beta-D-ribosyl)anthranilate + diphosphate = 5-phospho-alpha-D-ribose 1-diphosphate + anthranilate. It participates in amino-acid biosynthesis; L-tryptophan biosynthesis; L-tryptophan from chorismate: step 2/5. Catalyzes the transfer of the phosphoribosyl group of 5-phosphorylribose-1-pyrophosphate (PRPP) to anthranilate to yield N-(5'-phosphoribosyl)-anthranilate (PRA). This Acidothermus cellulolyticus (strain ATCC 43068 / DSM 8971 / 11B) protein is Anthranilate phosphoribosyltransferase.